A 97-amino-acid polypeptide reads, in one-letter code: Coiled-coil domain-containing protein 167 (97 aa).

Positions 36–80 (LRKMELTEEGRKSLEKEKSSLSSRLSNYERELKSLRHENRKNMLL) form a coiled coil. A helical transmembrane segment spans residues 78 to 95 (MLLSVAIFLLFAVGYYCW).

Its subcellular location is the membrane. The polypeptide is Coiled-coil domain-containing protein 167 (ccdc167) (Xenopus tropicalis (Western clawed frog)).